The primary structure comprises 412 residues: AT-rich interactive domain-containing protein 3C (412 aa).

A compositionally biased stretch (low complexity) spans 1–23; sequence MEALQKQQAARLAQGVGPLAPAC. The disordered stretch occupies residues 1–96; the sequence is MEALQKQQAA…SSQPPGLHPH (96 aa). Over residues 50 to 73 the composition is skewed to acidic residues; it reads AEEEEDAEEDEEKREEAGAEEEAA. The span at 78–87 shows a compositional bias: low complexity; sequence PGAQGPSSPS. One can recognise an ARID domain in the interval 113-205; sequence DPKRKEFLDD…YLYPYECETR (93 aa). Disordered stretches follow at residues 232–278 and 388–412; these read TPLF…AHAC and PVPA…SILP. Positions 259-272 are enriched in polar residues; that stretch reads TQSSPGPAQGSTSG. The REKLES domain maps to 304-389; the sequence is LALGPTREKL…GVLFARRQPV (86 aa).

As to quaternary structure, interacts (via REKLES DOMAIN) with NPM1; the interaction mediates ARID3C nuclear shuttling.

The protein localises to the nucleus. Its function is as follows. Transcription factor involved in monocyte-to-macrophage differentiation. Forms a complex with NPM1 to translocate to the nucleus, acting as a transcription factor that promotes the expression of the genes involved in macrophage differentiation, such as STAT3, STAT1 and JUNB. This chain is AT-rich interactive domain-containing protein 3C, found in Homo sapiens (Human).